Consider the following 198-residue polypeptide: Holliday junction resolvase RecU (198 aa).

The segment at 1 to 21 is disordered; the sequence is MVNYPHKLSSQKRQPSLSQPK. The span at 11–21 shows a compositional bias: polar residues; the sequence is QKRQPSLSQPK. Mg(2+) is bound by residues T81, D83, E96, and Q115.

Belongs to the RecU family. Mg(2+) serves as cofactor.

Its subcellular location is the cytoplasm. It catalyses the reaction Endonucleolytic cleavage at a junction such as a reciprocal single-stranded crossover between two homologous DNA duplexes (Holliday junction).. In terms of biological role, endonuclease that resolves Holliday junction intermediates in genetic recombination. Cleaves mobile four-strand junctions by introducing symmetrical nicks in paired strands. Promotes annealing of linear ssDNA with homologous dsDNA. Required for DNA repair, homologous recombination and chromosome segregation. The polypeptide is Holliday junction resolvase RecU (Streptococcus pneumoniae (strain ATCC 700669 / Spain 23F-1)).